Consider the following 651-residue polypeptide: DNA mismatch repair protein MutL (651 aa).

The interval Thr383–Gln405 is disordered.

Belongs to the DNA mismatch repair MutL/HexB family.

Its function is as follows. This protein is involved in the repair of mismatches in DNA. It is required for dam-dependent methyl-directed DNA mismatch repair. May act as a 'molecular matchmaker', a protein that promotes the formation of a stable complex between two or more DNA-binding proteins in an ATP-dependent manner without itself being part of a final effector complex. In Lacticaseibacillus casei (strain BL23) (Lactobacillus casei), this protein is DNA mismatch repair protein MutL.